The sequence spans 129 residues: uncharacterized protein (129 aa).

Residues 1-129 are disordered; it reads MGRMASPLRS…PARQSARMAR (129 aa). Residues 18-46 show a composition bias toward basic and acidic residues; sequence ESTRHKETSTVRVETSSHREETSSHRVET. Residues 47 to 59 show a composition bias toward low complexity; sequence SSRQVRTSSRQVE. Positions 70–97 are enriched in polar residues; the sequence is LTPSTKRLPQFLEVSSQHVETSSQCTET.

This is an uncharacterized protein from Mus musculus (Mouse).